The following is a 225-amino-acid chain: Uracil-DNA glycosylase (225 aa).

The active-site Proton acceptor is D65.

Belongs to the uracil-DNA glycosylase (UDG) superfamily. UNG family.

The protein resides in the cytoplasm. It carries out the reaction Hydrolyzes single-stranded DNA or mismatched double-stranded DNA and polynucleotides, releasing free uracil.. Its function is as follows. Excises uracil residues from the DNA which can arise as a result of misincorporation of dUMP residues by DNA polymerase or due to deamination of cytosine. The sequence is that of Uracil-DNA glycosylase from Bacillus licheniformis (strain ATCC 14580 / DSM 13 / JCM 2505 / CCUG 7422 / NBRC 12200 / NCIMB 9375 / NCTC 10341 / NRRL NRS-1264 / Gibson 46).